We begin with the raw amino-acid sequence, 102 residues long: Large ribosomal subunit protein bL21 (102 aa).

The protein belongs to the bacterial ribosomal protein bL21 family. In terms of assembly, part of the 50S ribosomal subunit. Contacts protein L20.

Its function is as follows. This protein binds to 23S rRNA in the presence of protein L20. This Bacillus cytotoxicus (strain DSM 22905 / CIP 110041 / 391-98 / NVH 391-98) protein is Large ribosomal subunit protein bL21.